Consider the following 393-residue polypeptide: NAD(P)H-quinone oxidoreductase subunit H, chloroplastic (393 aa).

It belongs to the complex I 49 kDa subunit family. NDH is composed of at least 16 different subunits, 5 of which are encoded in the nucleus.

It localises to the plastid. Its subcellular location is the chloroplast thylakoid membrane. The catalysed reaction is a plastoquinone + NADH + (n+1) H(+)(in) = a plastoquinol + NAD(+) + n H(+)(out). The enzyme catalyses a plastoquinone + NADPH + (n+1) H(+)(in) = a plastoquinol + NADP(+) + n H(+)(out). Its function is as follows. NDH shuttles electrons from NAD(P)H:plastoquinone, via FMN and iron-sulfur (Fe-S) centers, to quinones in the photosynthetic chain and possibly in a chloroplast respiratory chain. The immediate electron acceptor for the enzyme in this species is believed to be plastoquinone. Couples the redox reaction to proton translocation, and thus conserves the redox energy in a proton gradient. In Gossypium barbadense (Sea Island cotton), this protein is NAD(P)H-quinone oxidoreductase subunit H, chloroplastic.